The chain runs to 285 residues: Thrombin-like enzyme TLBm (285 aa).

Residues Val1 to Ala273 enclose the Peptidase S1 domain. Disulfide bonds link Cys7-Cys181, Cys30-Cys46, Cys94-Cys284, Cys156-Cys234, Cys192-Cys209, and Cys224-Cys249. Residues His45 and Asp113 each act as charge relay system in the active site. Catalysis depends on Ser228, which acts as the Charge relay system.

Belongs to the peptidase S1 family. Snake venom subfamily. As to quaternary structure, monomer. Post-translationally, homologous thrombin-like enzymes are N-glycosylated. This enzyme does not contain the consensus glycosylation sites, suggesting it is not glycosylated. Expressed by the venom gland.

The protein resides in the secreted. Its activity is regulated as follows. Inhibited by PMSF, disodium-EDTA, S(Dm) and soybean trypsin inhibitor (SBTI). SBTI and S(Dm) (the anti-hemorrhagic protein) acts as a non-competitive inhibitors that decrease the enzymatic activity. Functionally, thrombin-like enzyme that induces the formation of fibrin clot. Cleaves the Aalpha-chain of fibrinogen (FGA) with higher activity than the Bbeta-chain (FGB). Induces platelet aggregation in both platelet-rich plasma and in washed platelet preparations. This aggregation is strongly inhibited by preincubation of the enzyme with PMSF. The polypeptide is Thrombin-like enzyme TLBm (Bothrops marajoensis (Marajo lancehead)).